We begin with the raw amino-acid sequence, 261 residues long: Thiazole synthase (261 aa).

The Schiff-base intermediate with DXP role is filled by Lys-102. 1-deoxy-D-xylulose 5-phosphate is bound by residues Gly-163, 189–190 (AG), and 211–212 (NT).

This sequence belongs to the ThiG family. As to quaternary structure, homotetramer. Forms heterodimers with either ThiH or ThiS.

Its subcellular location is the cytoplasm. It carries out the reaction [ThiS sulfur-carrier protein]-C-terminal-Gly-aminoethanethioate + 2-iminoacetate + 1-deoxy-D-xylulose 5-phosphate = [ThiS sulfur-carrier protein]-C-terminal Gly-Gly + 2-[(2R,5Z)-2-carboxy-4-methylthiazol-5(2H)-ylidene]ethyl phosphate + 2 H2O + H(+). The protein operates within cofactor biosynthesis; thiamine diphosphate biosynthesis. Its function is as follows. Catalyzes the rearrangement of 1-deoxy-D-xylulose 5-phosphate (DXP) to produce the thiazole phosphate moiety of thiamine. Sulfur is provided by the thiocarboxylate moiety of the carrier protein ThiS. In vitro, sulfur can be provided by H(2)S. The polypeptide is Thiazole synthase (Acinetobacter baumannii (strain AB307-0294)).